A 210-amino-acid polypeptide reads, in one-letter code: Somatotropin-2 (210 aa).

The first 22 residues, 1-22 (MGQVFLLMPVLLVSCFLGQGAA), serve as a signal peptide directing secretion. His38 provides a ligand contact to Zn(2+). A disulfide bond links Cys71 and Cys183. Glu192 lines the Zn(2+) pocket. A disulfide bond links Cys200 and Cys208.

This sequence belongs to the somatotropin/prolactin family.

The protein localises to the secreted. In terms of biological role, growth hormone plays an important role in growth control and is involved in the regulation of several anabolic processes. Implicated as an osmoregulatory substance important for seawater adaptation. The chain is Somatotropin-2 (gh2) from Oncorhynchus mykiss (Rainbow trout).